The chain runs to 321 residues: ATP-dependent 6-phosphofructokinase (321 aa).

Gly-11 contacts ATP. 21–25 is a binding site for ADP; the sequence is RAVVR. ATP contacts are provided by residues 72 to 73 and 102 to 105; these read RC and GDGS. Residue Asp-103 participates in Mg(2+) binding. 126–128 contributes to the substrate binding site; that stretch reads TID. The active-site Proton acceptor is Asp-128. Residue Arg-155 participates in ADP binding. Substrate contacts are provided by residues Arg-163 and 170-172; that span reads MGR. ADP is bound by residues 186 to 188, Arg-212, and 214 to 216; these read GAE and KLH. Substrate-binding positions include Glu-223, Arg-245, and 251–254; that span reads HIQR.

It belongs to the phosphofructokinase type A (PFKA) family. ATP-dependent PFK group I subfamily. Prokaryotic clade 'B1' sub-subfamily. As to quaternary structure, homotetramer. Mg(2+) serves as cofactor.

The protein localises to the cytoplasm. It catalyses the reaction beta-D-fructose 6-phosphate + ATP = beta-D-fructose 1,6-bisphosphate + ADP + H(+). The protein operates within carbohydrate degradation; glycolysis; D-glyceraldehyde 3-phosphate and glycerone phosphate from D-glucose: step 3/4. Allosterically activated by ADP and other diphosphonucleosides, and allosterically inhibited by phosphoenolpyruvate. Functionally, catalyzes the phosphorylation of D-fructose 6-phosphate to fructose 1,6-bisphosphate by ATP, the first committing step of glycolysis. In Caldanaerobacter subterraneus subsp. tengcongensis (strain DSM 15242 / JCM 11007 / NBRC 100824 / MB4) (Thermoanaerobacter tengcongensis), this protein is ATP-dependent 6-phosphofructokinase.